Consider the following 20-residue polypeptide: Mite allergen Der p 6 (20 aa).

Residues 1 to 20 enclose the Peptidase S1 domain; the sequence is AIGXQPAAEAEAPFQISLMK.

The protein belongs to the peptidase S1 family.

It localises to the secreted. Its function is as follows. Protease that shows specificity similar to chymotrypsin. This Dermatophagoides pteronyssinus (European house dust mite) protein is Mite allergen Der p 6 (DERP6).